Here is a 381-residue protein sequence, read N- to C-terminus: Chymosin (381 aa).

The first 16 residues, 1-16, serve as a signal peptide directing secretion; that stretch reads MRCLVVLLAALALSQA. The propeptide at 17–58 is activation peptide; it reads SGITRIPLHKGKTLRKALKERGLLEDFLQRQQYAVSSKYSSL. The Peptidase A1 domain maps to 74–378; sequence YFGKIYIGTP…DRANNRVGLA (305 aa). The active site involves Asp92. Cysteines 105 and 110 form a disulfide. N-linked (GlcNAc...) asparagine glycosylation occurs at Asn158. Cys265 and Cys269 are oxidised to a cystine. Asp274 is a catalytic residue. Cys308 and Cys341 are disulfide-bonded. A glycan (N-linked (GlcNAc...) asparagine) is linked at Asn349.

The protein belongs to the peptidase A1 family.

It catalyses the reaction Broad specificity similar to that of pepsin A. Clots milk by cleavage of a single 104-Ser-Phe-|-Met-Ala-107 bond in kappa-chain of casein.. Functionally, chymosin is synthesized in the mucosa of the abomasum (fourth stomach) of young (unweaned) ruminants. The enzyme hydrolyzes casein to paracasein. The sequence is that of Chymosin from Camelus dromedarius (Dromedary).